The sequence spans 693 residues: Elongation factor G (693 aa).

The region spanning 9–283 (ERVRNIGIIA…AVCDYLPSPL (275 aa)) is the tr-type G domain. GTP-binding positions include 18 to 25 (AHIDAGKT), 82 to 86 (DTPGH), and 136 to 139 (NKMD).

It belongs to the TRAFAC class translation factor GTPase superfamily. Classic translation factor GTPase family. EF-G/EF-2 subfamily.

It is found in the cytoplasm. In terms of biological role, catalyzes the GTP-dependent ribosomal translocation step during translation elongation. During this step, the ribosome changes from the pre-translocational (PRE) to the post-translocational (POST) state as the newly formed A-site-bound peptidyl-tRNA and P-site-bound deacylated tRNA move to the P and E sites, respectively. Catalyzes the coordinated movement of the two tRNA molecules, the mRNA and conformational changes in the ribosome. The sequence is that of Elongation factor G from Dehalococcoides mccartyi (strain ATCC BAA-2100 / JCM 16839 / KCTC 5957 / BAV1).